The sequence spans 111 residues: Entry-fusion complex protein OPG086 (111 aa).

Residues 1–21 (MASLLYFILFLLFVCISYYFT) form a helical; Signal-anchor membrane-spanning segment. Residues 22 to 111 (YYPTNKLQAA…TLLPILLLSK (90 aa)) are Virion surface-facing.

Belongs to the orthopoxvirus OPG086 family. In terms of assembly, interacts with OPG099/L5. Component of the entry fusion complex (EFC) composed of OPG053, OPG076, OPG086, OPG094, OPG095, OPG099, OPG107, OPG143, OPG104, OPG147 and OPG155. Except for OPG095 and OPG053, each of the EFC proteins is required for assembly or stability of the complex. Unglycosylated because produced in viral factories instead of the classic ER -Golgi route.

It localises to the virion membrane. In terms of biological role, component of the entry fusion complex (EFC), which consists of 11 proteins. During cell infection, this complex mediates entry of the virion core into the host cytoplasm by a two-step mechanism consisting of lipid mixing of the viral and cellular membranes and subsequent pore formation. The polypeptide is Entry-fusion complex protein OPG086 (OPG086) (Variola virus (isolate Human/India/Ind3/1967) (VARV)).